The sequence spans 87 residues: Putative membrane protein insertion efficiency factor (87 aa).

The protein belongs to the UPF0161 family.

Its subcellular location is the cell membrane. In terms of biological role, could be involved in insertion of integral membrane proteins into the membrane. In Streptococcus pyogenes serotype M12 (strain MGAS2096), this protein is Putative membrane protein insertion efficiency factor.